We begin with the raw amino-acid sequence, 146 residues long: Metallothiol transferase FosB (146 aa).

The VOC domain occupies 4–120; it reads GINHMTFSVS…DGHLLEVHTG (117 aa). 3 residues coordinate Mg(2+): histidine 7, histidine 66, and glutamate 116. Glutamate 116 acts as the Proton donor/acceptor in catalysis.

This sequence belongs to the fosfomycin resistance protein family. FosB subfamily. As to quaternary structure, homodimer. The cofactor is Mg(2+).

The protein localises to the cytoplasm. Metallothiol transferase which confers resistance to fosfomycin by catalyzing the addition of a thiol cofactor to fosfomycin. L-cysteine is probably the physiological thiol donor. The sequence is that of Metallothiol transferase FosB from Shouchella clausii (strain KSM-K16) (Alkalihalobacillus clausii).